We begin with the raw amino-acid sequence, 296 residues long: Ribosomal protein L11 methyltransferase (296 aa).

Positions 145, 166, 188, and 230 each coordinate S-adenosyl-L-methionine.

This sequence belongs to the methyltransferase superfamily. PrmA family.

It localises to the cytoplasm. It carries out the reaction L-lysyl-[protein] + 3 S-adenosyl-L-methionine = N(6),N(6),N(6)-trimethyl-L-lysyl-[protein] + 3 S-adenosyl-L-homocysteine + 3 H(+). Its function is as follows. Methylates ribosomal protein L11. In Histophilus somni (strain 2336) (Haemophilus somnus), this protein is Ribosomal protein L11 methyltransferase.